Here is a 146-residue protein sequence, read N- to C-terminus: UPF0742 protein PB2B2.17c (146 aa).

The chain crosses the membrane as a helical span at residues 38–60 (LTVKYCLAVKLLIYLLYCWYIYS).

Belongs to the UPF0742 family.

It is found in the cytoplasm. It localises to the nucleus membrane. The chain is UPF0742 protein PB2B2.17c from Schizosaccharomyces pombe (strain 972 / ATCC 24843) (Fission yeast).